A 401-amino-acid chain; its full sequence is Probable tRNA sulfurtransferase (401 aa).

Residues 60-165 (EEICSLLKNI…EEATFLTIRN (106 aa)) form the THUMP domain. ATP is bound by residues 183–184 (ML), 208–209 (HF), arginine 265, glycine 287, and glutamine 296.

It belongs to the ThiI family.

The protein localises to the cytoplasm. The enzyme catalyses [ThiI sulfur-carrier protein]-S-sulfanyl-L-cysteine + a uridine in tRNA + 2 reduced [2Fe-2S]-[ferredoxin] + ATP + H(+) = [ThiI sulfur-carrier protein]-L-cysteine + a 4-thiouridine in tRNA + 2 oxidized [2Fe-2S]-[ferredoxin] + AMP + diphosphate. It carries out the reaction [ThiS sulfur-carrier protein]-C-terminal Gly-Gly-AMP + S-sulfanyl-L-cysteinyl-[cysteine desulfurase] + AH2 = [ThiS sulfur-carrier protein]-C-terminal-Gly-aminoethanethioate + L-cysteinyl-[cysteine desulfurase] + A + AMP + 2 H(+). It participates in cofactor biosynthesis; thiamine diphosphate biosynthesis. Catalyzes the ATP-dependent transfer of a sulfur to tRNA to produce 4-thiouridine in position 8 of tRNAs, which functions as a near-UV photosensor. Also catalyzes the transfer of sulfur to the sulfur carrier protein ThiS, forming ThiS-thiocarboxylate. This is a step in the synthesis of thiazole, in the thiamine biosynthesis pathway. The sulfur is donated as persulfide by IscS. The protein is Probable tRNA sulfurtransferase of Bacillus velezensis (strain DSM 23117 / BGSC 10A6 / LMG 26770 / FZB42) (Bacillus amyloliquefaciens subsp. plantarum).